A 132-amino-acid polypeptide reads, in one-letter code: Protein NrdI (132 aa).

Belongs to the NrdI family.

In terms of biological role, probably involved in ribonucleotide reductase function. The protein is Protein NrdI of Bartonella tribocorum (strain CIP 105476 / IBS 506).